Reading from the N-terminus, the 376-residue chain is MANSANTNTVPKLYRSVIEDVINDVRDIFLDDGVDEQVLMELKTLWENKLMQSRAVDGFHSEEQQLLLQVQQQHQPQQQQHHHHHHHQQAQPQQTVPQQAQTQQVLIPASQQATAPQVIVPDSKLIQHMNASNMSAAATAATLALPAGVTPVQQILTNSGQLLQVVRAANGAQYIFQPQQSVVLQQQVIPQMQPGGVQAPVIQQVLAPLPGGISPQTGVIIQPQQILFTGNKTQVIPTTVAAPTPAQAQITATGQQQPQAQPAQTQAPLVLQVDGTGDTSSEEDEDEEEDYDDDEEEDKEKDGAEDGQVEEEPLNSEDDVSDEEGQELFDTENVVVCQYDKIHRSKNKWKFHLKDGIMNLNGRDYIFSKAIGDAEW.

Alanine 2 carries the N-acetylalanine modification. Low complexity-rich tracts occupy residues 69–79 and 89–105; these read QVQQQHQPQQQ and QAQPQQTVPQQAQTQQV. 3 disordered regions span residues 69–107, 247–266, and 274–329; these read QVQQQHQPQQQQHHHHHHHQQAQPQQTVPQQAQTQQVLI, QAQITATGQQQPQAQPAQTQ, and DGTG…QELF. 4 positions are modified to phosphoserine; by TAF1: serine 280, serine 281, serine 316, and serine 321. Residues 280 to 329 show a composition bias toward acidic residues; the sequence is SSEEDEDEEEDYDDDEEEDKEKDGAEDGQVEEEPLNSEDDVSDEEGQELF. DNA contacts are provided by histidine 343 and arginine 344.

The protein belongs to the TFIIA subunit 1 family. In terms of assembly, TFIIA is a heterodimer of the large unprocessed subunit 1 and a small subunit gamma. It was originally believed to be a heterotrimer of an alpha (p35), a beta (p19) and a gamma subunit (p12). TFIIA forms a complex with TBP. Part of TBP-based Pol II pre-initiation complex (PIC), in which Pol II core assembles with general transcription factors and other specific initiation factors including GTF2E1, GTF2E2, GTF2F1, GTF2F2, TCEA1, ERCC2, ERCC3, GTF2H2, GTF2H3, GTF2H4, GTF2H5, GTF2A1, GTF2A2, GTF2B and TBP; this large multi-subunit PIC complex mediates DNA unwinding and targets Pol II core to the transcription start site where the first phosphodiester bond forms. In terms of processing, the alpha and beta subunits are postranslationally produced from the precursor form by TASP1. The cleavage promotes proteasomal degradation.

Its subcellular location is the nucleus. TFIIA is a component of the transcription machinery of RNA polymerase II and plays an important role in transcriptional activation. TFIIA in a complex with TBP mediates transcriptional activity. The polypeptide is Transcription initiation factor IIA subunit 1 (GTF2A1) (Homo sapiens (Human)).